The following is a 443-amino-acid chain: Carboxypeptidase M (443 aa).

The signal sequence occupies residues 1 to 17; the sequence is MDRARLWLGLLLPVVAA. The Peptidase M14 domain maps to 21–311; the sequence is RYHHQEGMEA…ASLIEYIKQV (291 aa). A glycan (N-linked (GlcNAc...) asparagine) is linked at Asn38. Zn(2+) is bound by residues His83 and Glu86. Intrachain disulfides connect Cys138–Cys285, Cys242–Cys284, and Cys341–Cys410. A glycan (N-linked (GlcNAc...) asparagine) is linked at Asn164. His190 lines the Zn(2+) pocket. Glu281 acts as the Proton donor/acceptor in catalysis. Asn363 carries an N-linked (GlcNAc...) asparagine glycan. The GPI-anchor amidated serine moiety is linked to residue Ser423. A propeptide spans 424-443 (removed in mature form); the sequence is AATKPSLGVFFMTLLYVFFK.

It belongs to the peptidase M14 family. It depends on Zn(2+) as a cofactor.

The protein localises to the cell membrane. It catalyses the reaction Cleavage of C-terminal arginine or lysine residues from polypeptides.. Specifically removes C-terminal basic residues (Arg or Lys) from peptides and proteins. It is believed to play important roles in the control of peptide hormone and growth factor activity at the cell surface, and in the membrane-localized degradation of extracellular proteins. This is Carboxypeptidase M (Cpm) from Mus musculus (Mouse).